We begin with the raw amino-acid sequence, 130 residues long: DNA-directed RNA polymerase subunit omega (130 aa).

Positions 110–130 (EELLKGLEGLAPPEEQPEEDE) are disordered.

Belongs to the RNA polymerase subunit omega family. As to quaternary structure, the RNAP catalytic core consists of 2 alpha, 1 beta, 1 beta' and 1 omega subunit. When a sigma factor is associated with the core the holoenzyme is formed, which can initiate transcription.

It carries out the reaction RNA(n) + a ribonucleoside 5'-triphosphate = RNA(n+1) + diphosphate. Functionally, promotes RNA polymerase assembly. Latches the N- and C-terminal regions of the beta' subunit thereby facilitating its interaction with the beta and alpha subunits. The polypeptide is DNA-directed RNA polymerase subunit omega (Rhodopseudomonas palustris (strain HaA2)).